A 375-amino-acid polypeptide reads, in one-letter code: tRNA-specific 2-thiouridylase MnmA (375 aa).

Residues A9 to S16 and L35 contribute to the ATP site. C105 functions as the Nucleophile in the catalytic mechanism. A disulfide bridge links C105 with C201. Residue G129 participates in ATP binding. Residues K151 to Q153 form an interaction with tRNA region. C201 functions as the Cysteine persulfide intermediate in the catalytic mechanism. The interval R307–Y308 is interaction with tRNA.

The protein belongs to the MnmA/TRMU family.

The protein resides in the cytoplasm. The enzyme catalyses S-sulfanyl-L-cysteinyl-[protein] + uridine(34) in tRNA + AH2 + ATP = 2-thiouridine(34) in tRNA + L-cysteinyl-[protein] + A + AMP + diphosphate + H(+). Catalyzes the 2-thiolation of uridine at the wobble position (U34) of tRNA, leading to the formation of s(2)U34. The polypeptide is tRNA-specific 2-thiouridylase MnmA (Leptospira interrogans serogroup Icterohaemorrhagiae serovar copenhageni (strain Fiocruz L1-130)).